We begin with the raw amino-acid sequence, 376 residues long: 2-aminoethylphosphonate--pyruvate transaminase 2 (376 aa).

N6-(pyridoxal phosphate)lysine is present on K194.

The protein belongs to the class-V pyridoxal-phosphate-dependent aminotransferase family. PhnW subfamily. As to quaternary structure, homodimer. Pyridoxal 5'-phosphate serves as cofactor.

The catalysed reaction is (2-aminoethyl)phosphonate + pyruvate = phosphonoacetaldehyde + L-alanine. Involved in phosphonate degradation. The protein is 2-aminoethylphosphonate--pyruvate transaminase 2 of Burkholderia lata (strain ATCC 17760 / DSM 23089 / LMG 22485 / NCIMB 9086 / R18194 / 383).